The chain runs to 151 residues: Caveolin-3 (151 aa).

Residues 1–83 (MMTEEHTDLE…RLLSTLLGVP (83 aa)) are Cytoplasmic-facing. Lys-38 is covalently cross-linked (Glycyl lysine isopeptide (Lys-Gly) (interchain with G-Cter in SUMO3)). Residues 84-104 (LALLWGFLFACISFCHIWAVV) constitute an intramembrane region (helical). The Cytoplasmic portion of the chain corresponds to 105-151 (PCIKSYLIEIQCISHIYSLCIRTFCNPLFAALGQVCSNIKVVLRREG).

Belongs to the caveolin family. As to quaternary structure, homooligomer. Interacts with DYSF. Interacts with DLG1 and KCNA5; forms a ternary complex. Interacts with DAG1 (via its C-terminal); the interaction prevents binding of DAG1 with DMD. Interacts with TRIM72. Interacts with MUSK; may regulate MUSK signaling. Interacts with POPDC1. Interacts with CAVIN1, CAVIN2 and CAVIN4. Post-translationally, sumoylation with SUMO3 by PIAS4 may reduce agonist-induced internalization and desensitization of adrenergic receptor ABRD2. Expressed predominantly in muscle.

Its subcellular location is the golgi apparatus membrane. It is found in the cell membrane. It localises to the membrane. The protein resides in the caveola. The protein localises to the sarcolemma. Its function is as follows. May act as a scaffolding protein within caveolar membranes. Interacts directly with G-protein alpha subunits and can functionally regulate their activity. May also regulate voltage-gated potassium channels. Plays a role in the sarcolemma repair mechanism of both skeletal muscle and cardiomyocytes that permits rapid resealing of membranes disrupted by mechanical stress. Mediates the recruitment of CAVIN2 and CAVIN3 proteins to the caveolae. The sequence is that of Caveolin-3 (Cav3) from Rattus norvegicus (Rat).